Reading from the N-terminus, the 290-residue chain is 4-hydroxybenzoate octaprenyltransferase (290 aa).

Transmembrane regions (helical) follow at residues 20–40 (IGILLLLWPTLWGLWLAAEGV), 43–63 (LDILLIFVLGTVLMRSAGCVV), 92–112 (EALLLAAGLSLVAFLLIQPLN), 114–131 (LTIELSFVALFLAASYPF), 135–155 (FFAMPQAYLGIAFSFGIPMAF), 160–180 (GEVPFPAWFLMGANLLWVIAY), 209–229 (VVGVVLCHMAFLAGMVAIGLL), 231–251 (NLGVIYYIGLATALGLILYQY), and 266–286 (FLHNNWVGATIFAGIVLDYLV).

It belongs to the UbiA prenyltransferase family. Requires Mg(2+) as cofactor.

It localises to the cell inner membrane. It carries out the reaction all-trans-octaprenyl diphosphate + 4-hydroxybenzoate = 4-hydroxy-3-(all-trans-octaprenyl)benzoate + diphosphate. It functions in the pathway cofactor biosynthesis; ubiquinone biosynthesis. Catalyzes the prenylation of para-hydroxybenzoate (PHB) with an all-trans polyprenyl group. Mediates the second step in the final reaction sequence of ubiquinone-8 (UQ-8) biosynthesis, which is the condensation of the polyisoprenoid side chain with PHB, generating the first membrane-bound Q intermediate 3-octaprenyl-4-hydroxybenzoate. This chain is 4-hydroxybenzoate octaprenyltransferase, found in Nitrosospira multiformis (strain ATCC 25196 / NCIMB 11849 / C 71).